The primary structure comprises 173 residues: Alpha-crystallin A chain (173 aa).

Methionine 1 bears the N-acetylmethionine mark. The interval 1 to 63 (MDITIQHPWF…RTVLESGISE (63 aa)) is required for complex formation with BFSP1 and BFSP2. Glutamine 6 bears the Deamidated glutamine; partial mark. Serine 45 is modified (phosphoserine). Glutamine 50 carries the deamidated glutamine; partial modification. The sHSP domain maps to 52–164 (LFRTVLESGI…SDRSIPVSRE (113 aa)). N6-acetyllysine is present on residues lysine 70 and lysine 99. Zn(2+)-binding residues include histidine 100, glutamate 102, and histidine 107. Serine 122 carries the post-translational modification Phosphoserine. Asparagine 123 bears the Deamidated asparagine; partial mark. Residues 146–167 (IHSDMDASHSDRSIPVSREEKP) are compositionally biased toward basic and acidic residues. The disordered stretch occupies residues 146 to 173 (IHSDMDASHSDRSIPVSREEKPTLAPSS). Position 154 (histidine 154) interacts with Zn(2+). The O-linked (GlcNAc) serine glycan is linked to serine 162.

Belongs to the small heat shock protein (HSP20) family. Heteromer composed of three CRYAA and one CRYAB subunits. Inter-subunit bridging via zinc ions enhances stability, which is crucial as there is no protein turn over in the lens. Can also form homodimers and homotetramers (dimers of dimers) which serve as the building blocks of homooligomers. Within homooligomers, the zinc-binding motif is created from residues of 3 different molecules. His-100 and Glu-102 from one molecule are ligands of the zinc ion, and His-107 and His-154 residues from additional molecules complete the site with tetrahedral coordination geometry. Part of a complex required for lens intermediate filament formation composed of BFSP1, BFSP2 and CRYAA. In terms of processing, acetylation at Lys-70 may increase chaperone activity. Undergoes age-dependent proteolytical cleavage at the C-terminus.

The protein localises to the cytoplasm. It localises to the nucleus. Contributes to the transparency and refractive index of the lens. Acts as a chaperone, preventing aggregation of various proteins under a wide range of stress conditions. Required for the correct formation of lens intermediate filaments as part of a complex composed of BFSP1, BFSP2 and CRYAA. This chain is Alpha-crystallin A chain (CRYAA), found in Osphranter rufus (Red kangaroo).